The sequence spans 856 residues: DNA mismatch repair protein MutS (856 aa).

An ATP-binding site is contributed by 618 to 625 (GPNMGGKS).

This sequence belongs to the DNA mismatch repair MutS family.

This protein is involved in the repair of mismatches in DNA. It is possible that it carries out the mismatch recognition step. This protein has a weak ATPase activity. The chain is DNA mismatch repair protein MutS from Shewanella baltica (strain OS195).